The primary structure comprises 191 residues: dCTP deaminase (191 aa).

Residues 112–117 (KSTYAR), 136–138 (TLE), Gln-157, Tyr-173, and Gln-183 contribute to the dCTP site. Catalysis depends on Glu-138, which acts as the Proton donor/acceptor.

This sequence belongs to the dCTP deaminase family. As to quaternary structure, homotrimer.

It carries out the reaction dCTP + H2O + H(+) = dUTP + NH4(+). It functions in the pathway pyrimidine metabolism; dUMP biosynthesis; dUMP from dCTP (dUTP route): step 1/2. In terms of biological role, catalyzes the deamination of dCTP to dUTP. This Xylella fastidiosa (strain 9a5c) protein is dCTP deaminase.